A 152-amino-acid polypeptide reads, in one-letter code: Deoxyuridine 5'-triphosphate nucleotidohydrolase (152 aa).

Substrate is bound by residues 71–73, Asn-84, 88–90, and Met-98; these read RSG and LID.

It belongs to the dUTPase family. It depends on Mg(2+) as a cofactor.

The catalysed reaction is dUTP + H2O = dUMP + diphosphate + H(+). It participates in pyrimidine metabolism; dUMP biosynthesis; dUMP from dCTP (dUTP route): step 2/2. In terms of biological role, this enzyme is involved in nucleotide metabolism: it produces dUMP, the immediate precursor of thymidine nucleotides and it decreases the intracellular concentration of dUTP so that uracil cannot be incorporated into DNA. This Salmonella arizonae (strain ATCC BAA-731 / CDC346-86 / RSK2980) protein is Deoxyuridine 5'-triphosphate nucleotidohydrolase.